The sequence spans 232 residues: DNA repair protein RecO (232 aa).

This sequence belongs to the RecO family.

Functionally, involved in DNA repair and RecF pathway recombination. This Francisella tularensis subsp. novicida (strain U112) protein is DNA repair protein RecO.